Reading from the N-terminus, the 738-residue chain is Interleukin-12 receptor subunit beta-1 (738 aa).

Positions 1 to 19 are cleaved as a signal peptide; sequence MDMMGLAGTSKHITFLLLC. Over 20-565 the chain is Extracellular; that stretch reads QLGASGPGDG…QRFSFEVQIS (546 aa). Fibronectin type-III domains lie at 47–152, 152–258, 259–359, 360–465, and 469–565; these read GPRN…TPPL, LGHI…PEVL, PQAK…LPAQ, ELTE…GNAS, and TPRH…VQIS. The N-linked (GlcNAc...) asparagine glycan is linked to N50. C53 and C63 are oxidised to a cystine. N73, N86, N130, N144, N169, and N188 each carry an N-linked (GlcNAc...) asparagine glycan. Residues 244–248 carry the WSXWS motif motif; sequence WSDWS. N-linked (GlcNAc...) asparagine glycosylation is found at N330, N368, N374, N401, N463, and N477. A helical transmembrane segment spans residues 566 to 591; that stretch reads RLSIIFASLGSFASVLLVGSLGYIGL. Residues 592-738 are Cytoplasmic-facing; the sequence is NRAAWHLCPP…PGPPTLGQEA (147 aa). A Box 1 motif motif is present at residues 598 to 606; sequence LCPPLPTPC.

This sequence belongs to the type I cytokine receptor family. Type 2 subfamily. As to quaternary structure, dimer or oligomer; disulfide-linked. Interacts with IL12RB2 to form the high affinity IL12 receptor. Heterodimer with IL23R; in presence of IL23. The heterodimer forms the IL23 receptor.

It is found in the membrane. Its function is as follows. Functions as an interleukin receptor which binds interleukin-12 with low affinity and is involved in IL12 transduction. Associated with IL12RB2 it forms a functional, high affinity receptor for IL12. Also associates with IL23R to form the interleukin-23 receptor which functions in IL23 signal transduction probably through activation of the Jak-Stat signaling cascade. The polypeptide is Interleukin-12 receptor subunit beta-1 (Il12rb1) (Mus musculus (Mouse)).